The sequence spans 363 residues: NAD(P)H-quinone oxidoreductase subunit 1, chloroplastic (363 aa).

A run of 7 helical transmembrane segments spans residues 30-50 (LVPILTLVVGITIGVLVIVWL), 98-118 (FSIGPSMAVISILLSYSVIPF), 129-149 (VGVFLWIAISSIAPIGLLMSG), 165-185 (AAQSISYEIPLTLCVLSISLL), 253-273 (FAFFYITSYFNLLVSSLFVTI), 303-323 (TTTELFITLAKTFFFLFISIT), and 336-356 (LLNLGWKFLLPISLGNLLLTT).

Belongs to the complex I subunit 1 family. In terms of assembly, NDH is composed of at least 16 different subunits, 5 of which are encoded in the nucleus.

The protein localises to the plastid. The protein resides in the chloroplast thylakoid membrane. The enzyme catalyses a plastoquinone + NADH + (n+1) H(+)(in) = a plastoquinol + NAD(+) + n H(+)(out). It catalyses the reaction a plastoquinone + NADPH + (n+1) H(+)(in) = a plastoquinol + NADP(+) + n H(+)(out). NDH shuttles electrons from NAD(P)H:plastoquinone, via FMN and iron-sulfur (Fe-S) centers, to quinones in the photosynthetic chain and possibly in a chloroplast respiratory chain. The immediate electron acceptor for the enzyme in this species is believed to be plastoquinone. Couples the redox reaction to proton translocation, and thus conserves the redox energy in a proton gradient. This Pelargonium hortorum (Common geranium) protein is NAD(P)H-quinone oxidoreductase subunit 1, chloroplastic.